The following is a 311-amino-acid chain: Glutaminase (311 aa).

S66, N116, E162, N169, Y193, Y245, and V263 together coordinate substrate.

It belongs to the glutaminase family. As to quaternary structure, homotetramer.

It catalyses the reaction L-glutamine + H2O = L-glutamate + NH4(+). This chain is Glutaminase, found in Rhodopseudomonas palustris (strain BisB5).